Here is a 30-residue protein sequence, read N- to C-terminus: Ornithine carbamoyltransferase, catabolic (30 aa).

This sequence belongs to the aspartate/ornithine carbamoyltransferase superfamily. OTCase family.

The protein resides in the cytoplasm. It carries out the reaction carbamoyl phosphate + L-ornithine = L-citrulline + phosphate + H(+). The protein operates within amino-acid degradation; L-arginine degradation via ADI pathway; carbamoyl phosphate from L-arginine: step 2/2. The polypeptide is Ornithine carbamoyltransferase, catabolic (arcB) (Aeromonas caviae (Aeromonas punctata)).